A 185-amino-acid chain; its full sequence is Ribosome-recycling factor (185 aa).

The protein belongs to the RRF family.

It localises to the cytoplasm. Responsible for the release of ribosomes from messenger RNA at the termination of protein biosynthesis. May increase the efficiency of translation by recycling ribosomes from one round of translation to another. This chain is Ribosome-recycling factor, found in Aromatoleum aromaticum (strain DSM 19018 / LMG 30748 / EbN1) (Azoarcus sp. (strain EbN1)).